A 60-amino-acid chain; its full sequence is Cytotoxin 3 (60 aa).

Cystine bridges form between Cys-3–Cys-21, Cys-14–Cys-38, Cys-42–Cys-53, and Cys-54–Cys-59.

This sequence belongs to the three-finger toxin family. Short-chain subfamily. Type IA cytotoxin sub-subfamily. Monomer in solution; Homodimer and oligomer in the presence of negatively charged lipids forming a pore with a size ranging between 20 and 30 Angstroms. As to expression, expressed by the venom gland.

It localises to the secreted. Its subcellular location is the target cell membrane. In terms of biological role, shows cytolytic activity on many different cells by forming pore in lipid membranes. In vivo, increases heart rate or kills the animal by cardiac arrest. In addition, it binds to heparin with high affinity, interacts with Kv channel-interacting protein 1 (KCNIP1) in a calcium-independent manner, and binds to integrin alpha-V/beta-3 (ITGAV/ITGB3) with moderate affinity. In Naja annulifera (Banded Egyptian cobra), this protein is Cytotoxin 3.